The chain runs to 451 residues: Signal transduction histidine-protein kinase ArlS (451 aa).

Transmembrane regions (helical) follow at residues 11–31 (IIVT…IIIF) and 156–176 (IIAL…SYVF). The region spanning 178 to 231 (TQITKPLVSLSNKMIEIRRDGFQNKLQLNTNYEEIDNLANTFNEMMSQIEESFN) is the HAMP domain. The Histidine kinase domain occupies 239-451 (DASHELRTPL…NKGTTFKIIF (213 aa)). H242 carries the phosphohistidine; by autocatalysis modification.

In terms of processing, autophosphorylated.

It is found in the cell membrane. It catalyses the reaction ATP + protein L-histidine = ADP + protein N-phospho-L-histidine.. Member of the two-component regulatory system ArlS/ArlR involved in the regulation of adhesion, autolysis, multidrug resistance and virulence. ArlS probably functions as a sensor protein kinase which is autophosphorylated at a histidine residue and transfers its phosphate group to ArlR. The sequence is that of Signal transduction histidine-protein kinase ArlS (arlS) from Staphylococcus aureus (strain bovine RF122 / ET3-1).